The following is a 1754-amino-acid chain: Collagen alpha-1(XVIII) chain (1754 aa).

The first 23 residues, 1-23 (MAPYPCGCHILLLLFCCLAAARA), serve as a signal peptide directing secretion. The interval 42-104 (ATTIPEPQGP…TSAESPDAPE (63 aa)) is disordered. A compositionally biased stretch (polar residues) spans 57–73 (TADTTTHVTPRNGSTEP). 3 N-linked (GlcNAc...) asparagine glycosylation sites follow: Asn68, Asn129, and Asn164. The segment at 152–256 (LALAGPSSTP…APSQQLQRPD (105 aa)) is disordered. The segment covering 157-169 (PSSTPQENGTTLW) has biased composition (polar residues). Positions 215-253 (SGRASLSSLLGGAPPWGSLQDPDSQGLSPAAAAPSQQLQ) are enriched in low complexity. An FZ domain is found at 329–446 (APAGRCLPLP…TQEDGYCVLI (118 aa)). 5 cysteine pairs are disulfide-bonded: Cys334-Cys397, Cys344-Cys390, Cys381-Cys419, Cys408-Cys443, and Cys412-Cys432. One can recognise a Laminin G-like domain in the interval 456–644 (EVGLLQLLGD…IAELKVRRDP (189 aa)). Residues 645-751 (QVSPMHCLDE…RTPGGRVKEG (107 aa)) form a nonhelical region 1 (NC1) region. Residues 645-1443 (QVSPMHCLDE…GPPGTMGASS (799 aa)) form a disordered region. Over residues 672–681 (DARELLREET) the composition is skewed to basic and acidic residues. Position 696 is a phosphothreonine (Thr696). Positions 717 to 738 (QTTVASLGAQTLPGSDSVSTWD) are enriched in polar residues. The interval 752-785 (GLKGQKGEPGVPGPPGRAGPPGSPCLPGPPGLPC) is triple-helical region 1 (COL1). Over residues 762–789 (VPGPPGRAGPPGSPCLPGPPGLPCPVSP) the composition is skewed to pro residues. Residues 786-795 (PVSPLGPAGP) form a nonhelical region 2 (NC2) region. A triple-helical region 2 (COL2) region spans residues 796–875 (ALQTVPGPQG…QGPPGPPGPS (80 aa)). Positions 815–831 (TPGRDGEPGDPGEDGKP) are enriched in basic and acidic residues. The span at 833-846 (DTGPQGFPGTPGDV) shows a compositional bias: low complexity. A compositionally biased stretch (pro residues) spans 862–874 (PPGPQGPPGPPGP). Positions 876–899 (FRHDKLTFIDMEGSGFGGDLEALR) are nonhelical region 3 (NC3). O-linked (Xyl...) (chondroitin sulfate) serine glycosylation occurs at Ser889. The tract at residues 900 to 1021 (GPRGFPGPPG…PGPPGPPGPG (122 aa)) is triple-helical region 3 (COL3). The segment covering 904 to 914 (FPGPPGPPGVP) has biased composition (pro residues). N-linked (GlcNAc...) asparagine glycosylation occurs at Asn926. The segment covering 930-942 (VPGPAGLPGVPGR) has biased composition (low complexity). Over residues 946–961 (PGFPGLPGPPGPPGRE) the composition is skewed to pro residues. Low complexity predominate over residues 976–1003 (AGAPGHKGSKGAPGPAGARGESGLAGAP). A compositionally biased stretch (pro residues) spans 1005 to 1021 (PAGPPGPPGPPGPPGPG). Residues 1022-1044 (LPAGFDDMEGSGGPFWSTARSAD) are nonhelical region 4 (NC4). Residues 1045 to 1127 (GPQGPPGLPG…PGPPGPPGPV (83 aa)) form a triple-helical region 4 (COL4) region. The span at 1053 to 1065 (PGLKGDPGVPGLP) shows a compositional bias: low complexity. The segment covering 1095–1109 (KGDRGSRGEKGDPGK) has biased composition (basic and acidic residues). The segment covering 1117 to 1126 (LPGPPGPPGP) has biased composition (pro residues). The tract at residues 1128–1141 (VYVSEQDGSVLSVP) is nonhelical region 5 (NC5). The span at 1141 to 1153 (PGPEGRPGFAGFP) shows a compositional bias: low complexity. Positions 1142–1183 (GPEGRPGFAGFPGPAGPKGNLGSKGERGSPGPKGEKGEPGSI) are triple-helical region 5 (COL5). A nonhelical region 6 (NC6) region spans residues 1184–1196 (FSPDGGALGPAQK). The interval 1197 to 1269 (GAKGEPGFRG…PGPPGPPGTP (73 aa)) is triple-helical region 6 (COL6). The segment covering 1254-1268 (PGPPGPPGPPGPPGT) has biased composition (pro residues). Residues 1270–1279 (VYDSNVFAES) form a nonhelical region 7 (NC7) region. Residues 1280 to 1312 (SRPGPPGLPGNQGPPGPKGAKGEVGPPGPPGQF) form a triple-helical region 7 (COL7) region. The segment covering 1282-1296 (PGPPGLPGNQGPPGP) has biased composition (pro residues). A nonhelical region 8 (NC8) region spans residues 1313 to 1324 (PFDFLQLEAEMK). Over residues 1321–1341 (AEMKGEKGDRGDAGQKGERGE) the composition is skewed to basic and acidic residues. The triple-helical region 8 (COL8) stretch occupies residues 1325–1346 (GEKGDRGDAGQKGERGEPGGGG). The Cell attachment site signature appears at 1330–1332 (RGD). The tract at residues 1347-1353 (FFGSSLP) is nonhelical region 9 (NC9). Composition is skewed to pro residues over residues 1353–1365 (PGPP…PGPR), 1401–1414 (PPGP…PSFP), and 1424–1436 (PGPP…PGPP). The tract at residues 1354–1411 (GPPGPPGPPGPRGYPGIPGPKGESIRGQPGPPGPQGPPGIGYEGRQGPPGPPGPPGPP) is triple-helical region 9 (COL9). Residues 1412 to 1424 (SFPGPHRQTISVP) form a nonhelical region 10 (NC10) region. A triple-helical region 10 (COL10) region spans residues 1425–1442 (GPPGPPGPPGPPGTMGAS). Residues 1443–1754 (SGVRLWATRQ…IENSFMTASK (312 aa)) form a nonhelical region 11 (NC11) region. The interval 1456–1501 (GQVHEVPEGWLIFVAEQEELYVRVQNGFRKVQLEARTPLPRGTDNE) is non-collagenous domain 1 association domain. Positions 1502 to 1571 (VAALQPPVVQ…RPARPTSPPA (70 aa)) are non-collagenous domain 1 hinge region. Residues 1511–1556 (QLHDSNPYPRREHPHPTARPWRADDILASPPRLPEPQPYPGAPHHS) form a disordered region. Over residues 1519–1535 (PRREHPHPTARPWRADD) the composition is skewed to basic and acidic residues. Positions 1541 to 1551 (PRLPEPQPYPG) are enriched in pro residues. Residue Thr1567 is glycosylated (O-linked (GalNAc...) threonine). His1572, His1574, His1582, and Asp1647 together coordinate Zn(2+). 2 disulfide bridges follow: Cys1604–Cys1744 and Cys1706–Cys1736.

It belongs to the multiplexin collagen family. Forms homotrimers. Recombinant non-collagenous domain 1 has stronger affinity to NID1, HSPG2 and laminin-1:NID1 complex and lower affinity to FBLN1 and FBLN2 than endostatin. As to quaternary structure, monomeric. Interacts with KDR/VEGFR2. Interacts with the ITGA5:ITGB1 complex. Interacts with NID1, HSPG2, laminin-1:NID1 complex, FBLN1 and FBLN2. Prolines at the third position of the tripeptide repeating unit (G-X-Y) of the triple-helical regions are hydroxylated. Post-translationally, circulating endostatins are found as sialoglycoprotein and asialoglycoprotein structures. In terms of processing, undergoes proteolytic processing by CTSL/cathepsin-L and elastase-like proteases to generate both non-collagenous domain 1 trimers and endostatin monomers. In tissue extracts (brain, skeletal muscle, heart, kidney, testis and liver) predominantly bands of approximately 38 kDa are detected; recombinant non-collagenous domain 1 shows similar mobility. In vitro, several proteolytic cleavage sites in the non-collagenous domain 1 hinge region generating different endostatin-like peptides are reported. In terms of tissue distribution, detected in placenta (at protein level). Present in multiple organs with highest levels in liver, lung and kidney.

It localises to the secreted. The protein localises to the extracellular space. Its subcellular location is the extracellular matrix. The protein resides in the basement membrane. Probably plays a major role in determining the retinal structure as well as in the closure of the neural tube. In terms of biological role, may regulate extracellular matrix-dependent motility and morphogenesis of endothelial and non-endothelial cells; the function requires homotrimerization and implicates MAPK signaling. Its function is as follows. Potently inhibits endothelial cell proliferation and angiogenesis. May inhibit angiogenesis by binding to the heparan sulfate proteoglycans involved in growth factor signaling. Inhibits VEGFA-induced endothelial cell proliferation and migration. Seems to inhibit VEGFA-mediated signaling by blocking the interaction of VEGFA to its receptor KDR/VEGFR2. Modulates endothelial cell migration in an integrin-dependent manner implicating integrin ITGA5:ITGB1 and to a lesser extent ITGAV:ITGB3 and ITGAV:ITGB5. May negatively regulate the activity of homotrimeric non-collagenous domain 1. In Homo sapiens (Human), this protein is Collagen alpha-1(XVIII) chain.